Here is a 526-residue protein sequence, read N- to C-terminus: Probable DNA ligase (526 aa).

E228 contacts ATP. Catalysis depends on K230, which acts as the N6-AMP-lysine intermediate. The ATP site is built by R235, R250, E279, F319, R391, and K397.

This sequence belongs to the ATP-dependent DNA ligase family. Requires Mg(2+) as cofactor.

The catalysed reaction is ATP + (deoxyribonucleotide)n-3'-hydroxyl + 5'-phospho-(deoxyribonucleotide)m = (deoxyribonucleotide)n+m + AMP + diphosphate.. Its function is as follows. DNA ligase that seals nicks in double-stranded DNA during DNA replication, DNA recombination and DNA repair. The polypeptide is Probable DNA ligase (Mycobacterium avium (strain 104)).